A 189-amino-acid chain; its full sequence is Ribosome maturation factor RimP (189 aa).

The protein belongs to the RimP family.

The protein localises to the cytoplasm. Functionally, required for maturation of 30S ribosomal subunits. The chain is Ribosome maturation factor RimP from Mycobacteroides abscessus (strain ATCC 19977 / DSM 44196 / CCUG 20993 / CIP 104536 / JCM 13569 / NCTC 13031 / TMC 1543 / L948) (Mycobacterium abscessus).